The primary structure comprises 416 residues: Enterobactin exporter EntS (416 aa).

The Cytoplasmic segment spans residues 1–21 (MNKQSWLLNLSLLKTHPAFRA). The helical transmembrane segment at 22–42 (VFLARFISIVSLGLLGVAVPV) threads the bilayer. Residues 43–55 (QIQMMTHSTWQVG) lie on the Periplasmic side of the membrane. The chain crosses the membrane as a helical span at residues 56–76 (LSVTLTGGAMFVGLMVGGVLA). Topologically, residues 77 to 83 (DRYERKK) are cytoplasmic. Residues 84 to 104 (VILLARGTCGIGFIGLCLNAL) form a helical membrane-spanning segment. The Periplasmic segment spans residues 105 to 109 (LPEPS). A helical transmembrane segment spans residues 110-130 (LLAIYLLGLWDGFFASLGVTA). Topologically, residues 131-156 (LLAATPALVGRENLMQAGAITMLTVR) are cytoplasmic. The chain crosses the membrane as a helical span at residues 157–177 (LGSVISPMIGGLLLATGGVAW). A topological domain (periplasmic) is located at residue Asn-178. A helical transmembrane segment spans residues 179–199 (YGLAAAGTFITLLPLLSLPAL). Residues 200–218 (PPPPQPREHPLKSLLAGFR) lie on the Cytoplasmic side of the membrane. The helical transmembrane segment at 219 to 239 (FLLASPLVGGIALLGGLLTMA) threads the bilayer. Residues 240–256 (SAVRVLYPALADNWQMS) are Periplasmic-facing. The chain crosses the membrane as a helical span at residues 257 to 277 (AAQIGFLYAAIPLGAAIGALT). Over 278–287 (SGKLAHSVRP) the chain is Cytoplasmic. A helical membrane pass occupies residues 288-307 (GLLMLLSTLGAFLAIGLFGL). Residues 308 to 313 (MPMWIL) lie on the Periplasmic side of the membrane. A helical transmembrane segment spans residues 314–336 (GVVCLALFGWLSAVSSLLQYTML). Residues 337-356 (QTQTPEAMLGRINGLWTAQN) are Cytoplasmic-facing. Residues 357 to 377 (VTGDAIGAALLGGLGAMMTPV) form a helical membrane-spanning segment. Residue Ala-378 is a topological domain, periplasmic. The helical transmembrane segment at 379-399 (SASASGFGLLIIGVLLLLVLV) threads the bilayer. The Cytoplasmic portion of the chain corresponds to 400 to 416 (ELRRFRQTPPQVTASDS).

Belongs to the major facilitator superfamily. EntS (TC 2.A.1.38) family.

It is found in the cell inner membrane. Functionally, component of an export pathway for enterobactin. The sequence is that of Enterobactin exporter EntS from Escherichia coli O6:H1 (strain CFT073 / ATCC 700928 / UPEC).